Consider the following 311-residue polypeptide: Malate dehydrogenase (311 aa).

NAD(+) is bound by residues 7-13 and aspartate 34; that span reads GAAGGIG. Substrate contacts are provided by arginine 81 and arginine 87. Residues asparagine 94 and 117–119 each bind NAD(+); that span reads ITN. Positions 119 and 153 each coordinate substrate. The active-site Proton acceptor is the histidine 177. An NAD(+)-binding site is contributed by methionine 227.

The protein belongs to the LDH/MDH superfamily. MDH type 1 family. As to quaternary structure, homodimer.

It carries out the reaction (S)-malate + NAD(+) = oxaloacetate + NADH + H(+). In terms of biological role, catalyzes the reversible oxidation of malate to oxaloacetate. This is Malate dehydrogenase from Histophilus somni (strain 2336) (Haemophilus somnus).